The primary structure comprises 1309 residues: Nuclear pore complex protein NUP1 (1309 aa).

9 disordered regions span residues 1-58 (MASA…GGGW), 83-118 (RKRL…HKED), 173-210 (AADS…GSMN), 266-296 (RTPF…VTPR), 329-348 (SKWE…SGLK), 384-417 (ESPL…NLVP), 467-538 (LGNL…EEHP), 594-617 (SEAM…NGSL), and 635-680 (SNMA…VFPN). The interval 2–677 (ASAARGESSN…LEEPKKPAAV (676 aa)) is 25 X 2 AA repeats of F-G. Over residues 22–32 (KFRKPTARRSQ) the composition is skewed to basic residues. Over residues 47–58 (GLGGGDVRGGGW) the composition is skewed to gly residues. Over residues 91–101 (TPLQSPEQQKQ) the composition is skewed to polar residues. Positions 195–204 (PSHERDRTHP) are enriched in basic and acidic residues. The span at 268–283 (PFPQKSPTMSLVTKPS) shows a compositional bias: polar residues. Residues 396–405 (KTTHTSKDSA) are compositionally biased toward basic and acidic residues. 2 stretches are compositionally biased toward polar residues: residues 597–617 (MPST…NGSL) and 635–659 (SNMA…SGKP). Basic and acidic residues predominate over residues 660–673 (TSEEKRIPLEEPKK). Residues 711–712 (FG) form repeat 1. The tract at residues 719 to 865 (KPTESKKTFS…VKNATFGNTS (147 aa)) is disordered. Low complexity-rich tracts occupy residues 728–741 (SNSA…TSAA) and 767–783 (SSPS…SDNS). Residues 789-803 (STVQSFAATHNSSSI) show a composition bias toward polar residues. Copy 2 of the repeat occupies 804-805 (FG). Residues 809–827 (TSNDSNSQSTSASPLSSTS) are compositionally biased toward low complexity. 12 tandem repeats follow at residues 831–832 (FG), 861–862 (FG), 869–870 (FG), 883–884 (FG), 898–899 (FG), 927–928 (FG), 956–957 (FG), 983–984 (FG), 1004–1005 (FG), 1029–1030 (FG), 1038–1039 (FG), and 1053–1054 (FG). Over residues 1004 to 1023 (FGAGNAQTGNTGSGTTTSTQ) the composition is skewed to low complexity. Positions 1004 to 1028 (FGAGNAQTGNTGSGTTTSTQSIPFQ) are disordered. The segment covering 1068–1086 (TPQLSSTNSSASSSSTMSS) has biased composition (low complexity). The interval 1068–1105 (TPQLSSTNSSASSSSTMSSPLFGTSWQAPNSSPNSGPV) is disordered. Repeat 15 spans residues 1089-1090 (FG). Positions 1096-1105 (PNSSPNSGPV) are enriched in low complexity. A run of 10 repeats spans residues 1121–1122 (FG), 1137–1138 (FG), 1151–1152 (FG), 1153–1154 (FG), 1166–1167 (FG), 1177–1178 (FG), 1186–1187 (FG), 1224–1225 (FG), 1238–1239 (FG), and 1255–1256 (FG). The disordered stretch occupies residues 1278 to 1309 (FQGGGSFSLGSTGGGDKSGRRIFKAKKSTRKK). Over residues 1279 to 1293 (QGGGSFSLGSTGGGD) the composition is skewed to gly residues. Over residues 1297 to 1309 (RRIFKAKKSTRKK) the composition is skewed to basic residues.

In terms of assembly, part of the nuclear pore complex (NPC). The NPC has an eight-fold symmetrical structure comprising a central transport channel and two rings, the cytoplasmic and nuclear rings, to which eight filaments are attached. The cytoplasmic filaments have loose ends, while the nuclear filaments are joined in a distal ring, forming a nuclear basket. NPCs are highly dynamic in configuration and composition, and can be devided in 3 subcomplexes, the NUP62 subcomplex, the NUP107-160 subcomplex and the NUP93 subcomplex, containing approximately 30 different nucleoporin proteins. Interacts with EER5, anchoring the TREX-2 complex on the nuclear pore complex. Interacts with UCH1 and UCH2.

Its subcellular location is the nucleus envelope. The protein localises to the nucleus. It localises to the nuclear pore complex. It is found in the cytoplasm. The protein resides in the cytosol. Its function is as follows. Nucleoporin required for nuclear mRNA export. Functions as an adapter and/or regulator molecule in the periphery of the nuclear pore complex (NPC). May interact with importin proteins and mediate active nucleocytoplasmic transport through the NPC. Involved in regulation of nuclear morphology. This chain is Nuclear pore complex protein NUP1, found in Arabidopsis thaliana (Mouse-ear cress).